We begin with the raw amino-acid sequence, 132 residues long: MWLSLVAIGAGAALGANLRWLLGMWLNALFPALPPGTLAANWLGAWLIGIAIALFAQLPQLSPEWRLFVVTGFLGALTTFSTFSAEMFGNLQAGRYAMALTGIAVHVAGSLAMTGLGIATFGALKQLGGIIK.

The next 4 membrane-spanning stretches (helical) occupy residues 5-25 (LVAI…LGMW), 36-56 (GTLA…ALFA), 68-88 (FVVT…AEMF), and 103-123 (IAVH…TFGA). 2 residues coordinate Na(+): Gly75 and Thr78.

It belongs to the fluoride channel Fluc/FEX (TC 1.A.43) family.

The protein resides in the cell inner membrane. It carries out the reaction fluoride(in) = fluoride(out). With respect to regulation, na(+) is not transported, but it plays an essential structural role and its presence is essential for fluoride channel function. Its function is as follows. Fluoride-specific ion channel. Important for reducing fluoride concentration in the cell, thus reducing its toxicity. This Chromohalobacter salexigens (strain ATCC BAA-138 / DSM 3043 / CIP 106854 / NCIMB 13768 / 1H11) protein is Fluoride-specific ion channel FluC.